The sequence spans 380 residues: ATP phosphoribosyltransferase regulatory subunit (380 aa).

It belongs to the class-II aminoacyl-tRNA synthetase family. HisZ subfamily. Heteromultimer composed of HisG and HisZ subunits.

The protein resides in the cytoplasm. It functions in the pathway amino-acid biosynthesis; L-histidine biosynthesis; L-histidine from 5-phospho-alpha-D-ribose 1-diphosphate: step 1/9. Required for the first step of histidine biosynthesis. May allow the feedback regulation of ATP phosphoribosyltransferase activity by histidine. The polypeptide is ATP phosphoribosyltransferase regulatory subunit (Thermoanaerobacter sp. (strain X514)).